A 377-amino-acid polypeptide reads, in one-letter code: UPF0425 pyridoxal phosphate-dependent protein MTH_1914 (377 aa).

At Lys-207 the chain carries N6-(pyridoxal phosphate)lysine.

This sequence belongs to the UPF0425 family. Pyridoxal 5'-phosphate serves as cofactor.

This Methanothermobacter thermautotrophicus (strain ATCC 29096 / DSM 1053 / JCM 10044 / NBRC 100330 / Delta H) (Methanobacterium thermoautotrophicum) protein is UPF0425 pyridoxal phosphate-dependent protein MTH_1914.